The sequence spans 320 residues: MQNRNFNNLIIKWAIRLISIMIIINTIFWSSISEAFPIYAQQGYENPREATGRIVCANCHLAKKPVDIEVPQSVLPNTVFEAVVKIPYDMQIKQVLANGKKGSLNVGAVLILPEGFELAPSDRIPPEMKEKIGNLFFQPYSNDKKNILVIGPVPGKKYSEMVFPILSPDPATNKEAHFLKYPIYVGGNRGRGQIYPDGSKSNNTVYNASITGKVSKIFRKEKGGYEITIDDISDGHKVVDISAAGPELIISEGELVKVDQPLTNNPNVGGFGQGDAEVVLQDPLRIQGLLLFFGSVILAQIFLVLKKKQFEKVQLAEMNF.

The first 35 residues, 1-35, serve as a signal peptide directing secretion; it reads MQNRNFNNLIIKWAIRLISIMIIINTIFWSSISEA. Residues Phe36, Cys56, Cys59, and His60 each contribute to the heme site. Residues 286 to 305 form a helical membrane-spanning segment; the sequence is IQGLLLFFGSVILAQIFLVL.

It belongs to the cytochrome f family. The 4 large subunits of the cytochrome b6-f complex are cytochrome b6, subunit IV (17 kDa polypeptide, petD), cytochrome f and the Rieske protein, while the 4 small subunits are PetG, PetL, PetM and PetN. The complex functions as a dimer. It depends on heme as a cofactor.

The protein resides in the plastid. The protein localises to the chloroplast thylakoid membrane. Component of the cytochrome b6-f complex, which mediates electron transfer between photosystem II (PSII) and photosystem I (PSI), cyclic electron flow around PSI, and state transitions. The sequence is that of Cytochrome f (petA) from Marchantia polymorpha (Common liverwort).